A 447-amino-acid chain; its full sequence is Glutamate--tRNA ligase 2 (447 aa).

The 'HIGH' region motif lies at 8-18; the sequence is PSPTGYLHVGN. Positions 239–243 match the 'KMSKS' region motif; sequence KLSKR. Lys-242 contributes to the ATP binding site.

It belongs to the class-I aminoacyl-tRNA synthetase family. Glutamate--tRNA ligase type 1 subfamily. As to quaternary structure, monomer.

The protein localises to the cytoplasm. The enzyme catalyses tRNA(Glu) + L-glutamate + ATP = L-glutamyl-tRNA(Glu) + AMP + diphosphate. Functionally, catalyzes the attachment of glutamate to tRNA(Glu) in a two-step reaction: glutamate is first activated by ATP to form Glu-AMP and then transferred to the acceptor end of tRNA(Glu). The polypeptide is Glutamate--tRNA ligase 2 (Granulibacter bethesdensis (strain ATCC BAA-1260 / CGDNIH1)).